The following is a 391-amino-acid chain: Arginine biosynthesis bifunctional protein ArgJ (391 aa).

6 residues coordinate substrate: Thr149, Lys172, Thr183, Glu263, Asn386, and Ser391. The Nucleophile role is filled by Thr183.

Belongs to the ArgJ family. As to quaternary structure, heterotetramer of two alpha and two beta chains.

Its subcellular location is the cytoplasm. It carries out the reaction N(2)-acetyl-L-ornithine + L-glutamate = N-acetyl-L-glutamate + L-ornithine. The enzyme catalyses L-glutamate + acetyl-CoA = N-acetyl-L-glutamate + CoA + H(+). It functions in the pathway amino-acid biosynthesis; L-arginine biosynthesis; L-ornithine and N-acetyl-L-glutamate from L-glutamate and N(2)-acetyl-L-ornithine (cyclic): step 1/1. The protein operates within amino-acid biosynthesis; L-arginine biosynthesis; N(2)-acetyl-L-ornithine from L-glutamate: step 1/4. Catalyzes two activities which are involved in the cyclic version of arginine biosynthesis: the synthesis of N-acetylglutamate from glutamate and acetyl-CoA as the acetyl donor, and of ornithine by transacetylation between N(2)-acetylornithine and glutamate. The chain is Arginine biosynthesis bifunctional protein ArgJ from Bifidobacterium longum (strain NCC 2705).